A 217-amino-acid chain; its full sequence is Large ribosomal subunit protein uL3 (217 aa).

Positions Phe-131–Asp-155 are disordered. Low complexity predominate over residues Ser-132–Asn-145. Residue Gln-154 is modified to N5-methylglutamine.

This sequence belongs to the universal ribosomal protein uL3 family. In terms of assembly, part of the 50S ribosomal subunit. Forms a cluster with proteins L14 and L19. Post-translationally, methylated by PrmB.

Its function is as follows. One of the primary rRNA binding proteins, it binds directly near the 3'-end of the 23S rRNA, where it nucleates assembly of the 50S subunit. The polypeptide is Large ribosomal subunit protein uL3 (Nitrosomonas eutropha (strain DSM 101675 / C91 / Nm57)).